The sequence spans 130 residues: Small ribosomal subunit protein uS8 (130 aa).

It belongs to the universal ribosomal protein uS8 family. As to quaternary structure, part of the 30S ribosomal subunit. Contacts proteins S5 and S12.

One of the primary rRNA binding proteins, it binds directly to 16S rRNA central domain where it helps coordinate assembly of the platform of the 30S subunit. This is Small ribosomal subunit protein uS8 from Onion yellows phytoplasma (strain OY-M).